Here is a 193-residue protein sequence, read N- to C-terminus: MYHDLIRSELNEAADTLAKFINDDANIDAIQRAAVLLADSFKAGGKVISCGNGGSHCDAMHFAEELTGRYRENRPGYPAIAISDVSHLSCVSNDFGYEYVFSRYVEAVGREGDVLLGISTSGNSGNIIKAIEAARAKGMKVITLTGKDGGKMAGSADVEIRVPHFGYADRIQEIHIKAIHILIQLIEKEMVKA.

The SIS domain maps to 37-193; it reads LADSFKAGGK…QLIEKEMVKA (157 aa). 52–54 is a binding site for substrate; that stretch reads NGG. Zn(2+)-binding residues include His-61 and Glu-65. Residues Glu-65, 93–94, 119–121, Ser-124, and Gln-172 each bind substrate; these read ND and STS. Zn(2+) is bound by residues Gln-172 and His-180.

Belongs to the SIS family. GmhA subfamily. As to quaternary structure, homotetramer. It depends on Zn(2+) as a cofactor.

The protein resides in the cytoplasm. It carries out the reaction 2 D-sedoheptulose 7-phosphate = D-glycero-alpha-D-manno-heptose 7-phosphate + D-glycero-beta-D-manno-heptose 7-phosphate. Its pathway is carbohydrate biosynthesis; D-glycero-D-manno-heptose 7-phosphate biosynthesis; D-glycero-alpha-D-manno-heptose 7-phosphate and D-glycero-beta-D-manno-heptose 7-phosphate from sedoheptulose 7-phosphate: step 1/1. Its function is as follows. Catalyzes the isomerization of sedoheptulose 7-phosphate in D-glycero-D-manno-heptose 7-phosphate. The polypeptide is Phosphoheptose isomerase (Serratia proteamaculans (strain 568)).